The sequence spans 375 residues: Probable cytochrome c oxidase subunit 2 (375 aa).

A run of 3 helical transmembrane segments spans residues 36-56, 80-100, and 122-142; these read LAVS…DNVW, IIAA…TVVF, and LTYT…TVVV. Positions 264, 305, 309, and 313 each coordinate Cu cation. Polar residues predominate over residues 353-363; it reads VATSTRPFNTD. Residues 353-375 form a disordered region; sequence VATSTRPFNTDRTVKSAAAPEAE.

The protein belongs to the cytochrome c oxidase subunit 2 family. Cu cation is required as a cofactor. Heme serves as cofactor.

It is found in the cell membrane. The catalysed reaction is 4 Fe(II)-[cytochrome c] + O2 + 8 H(+)(in) = 4 Fe(III)-[cytochrome c] + 2 H2O + 4 H(+)(out). Functionally, subunits I and II form the functional core of the enzyme complex. Electrons originating in cytochrome c are transferred via heme a and Cu(A) to the binuclear center formed by heme a3 and Cu(B). The sequence is that of Probable cytochrome c oxidase subunit 2 (ctaC) from Nocardia farcinica (strain IFM 10152).